The primary structure comprises 475 residues: ATP synthase subunit beta (475 aa).

An ATP-binding site is contributed by 154 to 161 (GGAGVGKT).

It belongs to the ATPase alpha/beta chains family. As to quaternary structure, F-type ATPases have 2 components, CF(1) - the catalytic core - and CF(0) - the membrane proton channel. CF(1) has five subunits: alpha(3), beta(3), gamma(1), delta(1), epsilon(1). CF(0) has three main subunits: a(1), b(2) and c(9-12). The alpha and beta chains form an alternating ring which encloses part of the gamma chain. CF(1) is attached to CF(0) by a central stalk formed by the gamma and epsilon chains, while a peripheral stalk is formed by the delta and b chains.

The protein resides in the cell inner membrane. It carries out the reaction ATP + H2O + 4 H(+)(in) = ADP + phosphate + 5 H(+)(out). In terms of biological role, produces ATP from ADP in the presence of a proton gradient across the membrane. The catalytic sites are hosted primarily by the beta subunits. In Hyphomonas neptunium (strain ATCC 15444), this protein is ATP synthase subunit beta.